The chain runs to 554 residues: Propanediol dehydratase large subunit (554 aa).

The protein belongs to the diol/glycerol dehydratase large subunit family. In terms of assembly, the propanediol dehydratase enzyme is a heterotrimeric complex composed of a large (PduC), a medium (PduD) and a small (PduE) subunit. Adenosylcob(III)alamin is required as a cofactor.

It is found in the bacterial microcompartment. The catalysed reaction is propane-1,2-diol = propanal + H2O. Its pathway is polyol metabolism; 1,2-propanediol degradation. With respect to regulation, inhibited by glycerol. Its function is as follows. Part of the PduCDE complex that catalyzes the dehydration of 1,2-propanediol (1,2-PD) to propionaldehyde. Required for S.typhimurium growth on 1,2-PD as the sole carbon and energy source. This subunit is directly targeted to the BMC. The 1,2-PD-specific bacterial microcompartment (BMC) concentrates low levels of 1,2-PD catabolic enzymes, concentrates volatile reaction intermediates thus enhancing pathway flux and keeps the level of toxic, mutagenic propionaldehyde low. This Salmonella typhimurium (strain LT2 / SGSC1412 / ATCC 700720) protein is Propanediol dehydratase large subunit.